The chain runs to 424 residues: UDP-N-acetylglucosamine 1-carboxyvinyltransferase (424 aa).

Lys-22–Asn-23 is a binding site for phosphoenolpyruvate. Arg-93 contributes to the UDP-N-acetyl-alpha-D-glucosamine binding site. The active-site Proton donor is Cys-117. At Cys-117 the chain carries 2-(S-cysteinyl)pyruvic acid O-phosphothioketal. Residues Arg-122–Leu-126, Ser-164–Gly-166, Asp-307, and Ile-329 each bind UDP-N-acetyl-alpha-D-glucosamine.

This sequence belongs to the EPSP synthase family. MurA subfamily.

The protein localises to the cytoplasm. It carries out the reaction phosphoenolpyruvate + UDP-N-acetyl-alpha-D-glucosamine = UDP-N-acetyl-3-O-(1-carboxyvinyl)-alpha-D-glucosamine + phosphate. It participates in cell wall biogenesis; peptidoglycan biosynthesis. Functionally, cell wall formation. Adds enolpyruvyl to UDP-N-acetylglucosamine. The polypeptide is UDP-N-acetylglucosamine 1-carboxyvinyltransferase (Haemophilus influenzae (strain ATCC 51907 / DSM 11121 / KW20 / Rd)).